The primary structure comprises 198 residues: Recombination protein RecR (198 aa).

The C4-type zinc-finger motif lies at Cys57–Cys72. The 96-residue stretch at Thr80–Pro175 folds into the Toprim domain.

This sequence belongs to the RecR family.

Functionally, may play a role in DNA repair. It seems to be involved in an RecBC-independent recombinational process of DNA repair. It may act with RecF and RecO. The sequence is that of Recombination protein RecR from Burkholderia cenocepacia (strain HI2424).